The following is a 3948-amino-acid chain: Equisetin synthetase eqxS (3948 aa).

Residues 4–438 (SEPIAVIGSA…GTNAHAIIEA (435 aa)) form the Ketosynthase family 3 (KS3) domain. Active-site for beta-ketoacyl synthase activity residues include cysteine 177, histidine 316, and histidine 358. The tract at residues 543-847 (IFTGQGTQWP…DTIEAISEGR (305 aa)) is malonyl-CoA:ACP transacylase (MAT) domain. The segment at 931–1066 (HPLLGRRCHD…AQIKASLGAP (136 aa)) is N-terminal hotdog fold. Positions 931–1233 (HPLLGRRCHD…MELVPFSPAT (303 aa)) are dehydratase (DH) domain. Residues 931–1235 (HPLLGRRCHD…LVPFSPATPA (305 aa)) enclose the PKS/mFAS DH domain. The Proton acceptor; for dehydratase activity role is filled by histidine 964. Residues 1081 to 1235 (LRPVSVDRFY…LVPFSPATPA (155 aa)) are C-terminal hotdog fold. Catalysis depends on aspartate 1141, which acts as the Proton donor; for dehydratase activity. Positions 1376–1574 (MLQDVYEQGF…GIDTTTPPVH (199 aa)) are methyltransferase (MT) domain. The tract at residues 2105 to 2277 (TFLLVGLTGE…VAASSIDISS (173 aa)) is ketoreductase (KR) domain. The Carrier 1 domain maps to 2389-2464 (AIIKESFIVR…DLVDECLDLL (76 aa)). Serine 2424 carries the post-translational modification O-(pantetheine 4'-phosphoryl)serine. The disordered stretch occupies residues 2480-2553 (QAAKPTTVIP…NSTDILAPPR (74 aa)). Composition is skewed to polar residues over residues 2487–2505 (VIPQTPTRVTPPESSQGTS) and 2513–2528 (GSDSSHSPIGTPLTSW). The span at 2529–2541 (DRQDSSPPDKSDD) shows a compositional bias: basic and acidic residues. The segment at 2564–2991 (SYGQAGFWFL…IRGSDKTVDA (428 aa)) is condensation (C) domain. Positions 3026-3424 (QVIQDNPDNI…DGLLFCDGRL (399 aa)) are adenylation (A) (KR) domain. The Carrier 2 domain maps to 3540-3617 (EILTPSEQRL…AMAGVLEDCG (78 aa)). At serine 3577 the chain carries O-(pantetheine 4'-phosphoryl)serine. Residues 3653-3870 (LTGSSGYLGR…MPVNEVVEAI (218 aa)) are reductase (RED) domain.

The protein in the C-terminal section; belongs to the NRP synthetase family.

It carries out the reaction L-serine + 7 malonyl-CoA + acetyl-CoA + 2 S-adenosyl-L-methionine + ATP + 8 NADPH + 11 H(+) = (5S)-3-[(2E,6R,8E,10E,12E)-2,6-dimethyltetradeca-2,8,10,12-tetraenoyl]-5-(hydroxymethyl)pyrrolidine-2,4-dione + AMP + 2 S-adenosyl-L-homocysteine + 7 CO2 + diphosphate + 8 NADP(+) + 8 CoA + 6 H2O. The protein operates within mycotoxin biosynthesis. In terms of biological role, hybrid PKS-NRPS synthetase; part of the gene cluster that mediates the biosynthesis of equisetin, a trans-fused decalin-containing tetramic acid with antimicrobial activity. The PKS module of eqxS together with the enoylreductase eqxC catalyze the formation of the polyketide unit which is then conjugated to L-serine by the condensation domain of the eqxS NRPS module. Activity of the Dieckmann cyclase domain (RED) results in release of the Dieckmann product intermediate. Diels-Alderase eqx3 is involved in endo-selective Diels-Alder cycloaddition to form the decalin ring, leading to the production of N-desmethylequisetin also called trichosetin. Subsequent N-methylation is carried out by eqxD to give equisetin. The sequence is that of Equisetin synthetase eqxS from Fusarium heterosporum.